The following is a 475-amino-acid chain: UDP-N-acetylmuramate--L-alanine ligase (475 aa).

114–120 (GTHGKTT) serves as a coordination point for ATP.

It belongs to the MurCDEF family.

The protein resides in the cytoplasm. It catalyses the reaction UDP-N-acetyl-alpha-D-muramate + L-alanine + ATP = UDP-N-acetyl-alpha-D-muramoyl-L-alanine + ADP + phosphate + H(+). It functions in the pathway cell wall biogenesis; peptidoglycan biosynthesis. Cell wall formation. The protein is UDP-N-acetylmuramate--L-alanine ligase of Bartonella quintana (strain Toulouse) (Rochalimaea quintana).